Reading from the N-terminus, the 171-residue chain is MSVSFRDRVLKLYLLGFDPSEIAQTLSLDVKRKVTEEEVLHVLAEARELLSALPSLEDIRAEVGQALERARIFQKDLLAIYQNMLRNYNAMMEGLTEHPDGTPVIGVRPADIAAMADRIMKIDQERITALLNSLKVLGHVGSTTAGALPSATELVSVEELVAEVVDEAPKT.

It belongs to the P23virus small terminase family. As to quaternary structure, homononamer; forms a ring-like structure through which genomic DNA is translocated into the capsid. Heterodimer with the terminase large subunit; the active complex is probably heterooligomeric.

Its function is as follows. The terminase small subunit binds to the packaging initiation site and regulates the ATPase activity of the terminase large subunit. The terminase lies at a unique vertex of the procapsid and is composed of two subunits, a small terminase subunit involved in viral DNA recognition (packaging sequence), and a large terminase subunit. Both terminase subunits heterooligomerize and are docked on the portal protein to form the packaging machine. This is Terminase, small subunit from Thermus phage G20c (Thermus thermophilus phage G20c).